Reading from the N-terminus, the 159-residue chain is Phosphopantetheine adenylyltransferase (159 aa).

A substrate-binding site is contributed by threonine 10. ATP-binding positions include 10–11 (TF) and histidine 18. 3 residues coordinate substrate: lysine 42, methionine 74, and arginine 88. ATP-binding positions include 89–91 (GLR), glutamate 99, and 124–130 (WSFISSS).

The protein belongs to the bacterial CoaD family. Homohexamer. Mg(2+) is required as a cofactor.

The protein resides in the cytoplasm. The catalysed reaction is (R)-4'-phosphopantetheine + ATP + H(+) = 3'-dephospho-CoA + diphosphate. It functions in the pathway cofactor biosynthesis; coenzyme A biosynthesis; CoA from (R)-pantothenate: step 4/5. Functionally, reversibly transfers an adenylyl group from ATP to 4'-phosphopantetheine, yielding dephospho-CoA (dPCoA) and pyrophosphate. The polypeptide is Phosphopantetheine adenylyltransferase (Yersinia enterocolitica serotype O:8 / biotype 1B (strain NCTC 13174 / 8081)).